Reading from the N-terminus, the 156-residue chain is 2-C-methyl-D-erythritol 2,4-cyclodiphosphate synthase (156 aa).

A divalent metal cation-binding residues include aspartate 9 and histidine 11. Residues 9–11 and 35–36 each bind 4-CDP-2-C-methyl-D-erythritol 2-phosphate; these read DAH and HS. Residue histidine 43 participates in a divalent metal cation binding. 57–59 contributes to the 4-CDP-2-C-methyl-D-erythritol 2-phosphate binding site; the sequence is DIG.

The protein belongs to the IspF family. As to quaternary structure, homotrimer. It depends on a divalent metal cation as a cofactor.

The catalysed reaction is 4-CDP-2-C-methyl-D-erythritol 2-phosphate = 2-C-methyl-D-erythritol 2,4-cyclic diphosphate + CMP. Its pathway is isoprenoid biosynthesis; isopentenyl diphosphate biosynthesis via DXP pathway; isopentenyl diphosphate from 1-deoxy-D-xylulose 5-phosphate: step 4/6. Involved in the biosynthesis of isopentenyl diphosphate (IPP) and dimethylallyl diphosphate (DMAPP), two major building blocks of isoprenoid compounds. Catalyzes the conversion of 4-diphosphocytidyl-2-C-methyl-D-erythritol 2-phosphate (CDP-ME2P) to 2-C-methyl-D-erythritol 2,4-cyclodiphosphate (ME-CPP) with a corresponding release of cytidine 5-monophosphate (CMP). This Hydrogenobaculum sp. (strain Y04AAS1) protein is 2-C-methyl-D-erythritol 2,4-cyclodiphosphate synthase.